Reading from the N-terminus, the 219-residue chain is Tegument protein UL14 (219 aa).

The segment at 159–219 is disordered; it reads VHTDAPSRPG…GFARDCPDGE (61 aa). Over residues 186–202 the composition is skewed to pro residues; that stretch reads APPPETAPSPEPAPGPA.

This sequence belongs to the alphaherpesvirinae HHV-1 UL14 protein family. Phosphorylated.

The protein localises to the virion tegument. It is found in the host cytoplasm. It localises to the host nucleus. In terms of biological role, contributes to the nuclear transport of the viral transcriptional activator VP16 during the early phase of infection. Therefore, participates indirectly in the regulation of the immediate-early gene expression. Additionally, seems to be important for efficient nuclear targeting of capsids. This Human herpesvirus 2 (strain HG52) (HHV-2) protein is Tegument protein UL14.